Consider the following 217-residue polypeptide: Uracil-DNA glycosylase (217 aa).

Aspartate 62 functions as the Proton acceptor in the catalytic mechanism.

It belongs to the uracil-DNA glycosylase (UDG) superfamily. UNG family.

It is found in the cytoplasm. The enzyme catalyses Hydrolyzes single-stranded DNA or mismatched double-stranded DNA and polynucleotides, releasing free uracil.. Functionally, excises uracil residues from the DNA which can arise as a result of misincorporation of dUMP residues by DNA polymerase or due to deamination of cytosine. The sequence is that of Uracil-DNA glycosylase from Streptococcus sanguinis (strain SK36).